The chain runs to 392 residues: Galactokinase (392 aa).

Position 37-40 (E37–D40) interacts with substrate. Residues S71 and G128–S134 each bind ATP. Mg(2+) is bound by residues S134 and E166. D178 functions as the Proton acceptor in the catalytic mechanism. Substrate is bound at residue Y228.

This sequence belongs to the GHMP kinase family. GalK subfamily.

It is found in the cytoplasm. It catalyses the reaction alpha-D-galactose + ATP = alpha-D-galactose 1-phosphate + ADP + H(+). It functions in the pathway carbohydrate metabolism; galactose metabolism. In terms of biological role, catalyzes the transfer of the gamma-phosphate of ATP to D-galactose to form alpha-D-galactose-1-phosphate (Gal-1-P). This Streptococcus pneumoniae (strain ATCC BAA-255 / R6) protein is Galactokinase.